The sequence spans 197 residues: Thymidylate kinase (197 aa).

7–14 (GIDGSGKS) serves as a coordination point for ATP.

The protein belongs to the thymidylate kinase family.

The enzyme catalyses dTMP + ATP = dTDP + ADP. Its function is as follows. Phosphorylation of dTMP to form dTDP in both de novo and salvage pathways of dTTP synthesis. This is Thymidylate kinase from Thermotoga petrophila (strain ATCC BAA-488 / DSM 13995 / JCM 10881 / RKU-1).